A 260-amino-acid chain; its full sequence is Putative ATP-binding protein BruAb2_1123 (260 aa).

In terms of domain architecture, ABC transporter spans 5-228; that stretch reads ISFNNVVMRY…DLPYPRTEAI (224 aa). 37–44 contacts ATP; that stretch reads GPSGCGKS.

It belongs to the ABC transporter superfamily. In terms of assembly, the complex is composed of two ATP-binding proteins (BruAb2_1123), two transmembrane proteins (BruAb2_1124) and a solute-binding protein (BruAb2_1122).

It is found in the cell inner membrane. Probably part of an ABC transporter complex. Probably Responsible for energy coupling to the transport system. In Brucella abortus biovar 1 (strain 9-941), this protein is Putative ATP-binding protein BruAb2_1123.